The chain runs to 107 residues: uncharacterized protein (107 aa).

2 consecutive transmembrane segments (helical) span residues 11–31 (CVNF…ILCI) and 58–78 (LFFL…LAFQ).

The protein resides in the mitochondrion membrane. This is an uncharacterized protein from Saccharomyces cerevisiae (strain ATCC 204508 / S288c) (Baker's yeast).